A 757-amino-acid chain; its full sequence is Polyribonucleotide nucleotidyltransferase (757 aa).

Positions 532 and 538 each coordinate Mg(2+). Residues 598–657 (PRVTAIKVPVDKIGEVIGPKGKMINSITEQTGANISIEDDGTVFVGATDGPSAQAAIDMI) enclose the KH domain. Residues 669-738 (GERFLGTVVK…NRGKISLIPV (70 aa)) enclose the S1 motif domain.

Belongs to the polyribonucleotide nucleotidyltransferase family. Requires Mg(2+) as cofactor.

It is found in the cytoplasm. It carries out the reaction RNA(n+1) + phosphate = RNA(n) + a ribonucleoside 5'-diphosphate. Involved in mRNA degradation. Catalyzes the phosphorolysis of single-stranded polyribonucleotides processively in the 3'- to 5'-direction. The sequence is that of Polyribonucleotide nucleotidyltransferase from Rhodococcus jostii (strain RHA1).